The sequence spans 207 residues: Large ribosomal subunit protein uL4 (207 aa).

Residues 44 to 77 (LRQGTHKTKGRSEVRGGGRKPWRQKGTGRARQGS) are disordered. Positions 60 to 71 (GGRKPWRQKGTG) are enriched in basic residues.

It belongs to the universal ribosomal protein uL4 family. As to quaternary structure, part of the 50S ribosomal subunit.

Its function is as follows. One of the primary rRNA binding proteins, this protein initially binds near the 5'-end of the 23S rRNA. It is important during the early stages of 50S assembly. It makes multiple contacts with different domains of the 23S rRNA in the assembled 50S subunit and ribosome. Forms part of the polypeptide exit tunnel. This Shouchella clausii (strain KSM-K16) (Alkalihalobacillus clausii) protein is Large ribosomal subunit protein uL4.